Consider the following 366-residue polypeptide: Lysophosphatidic acid receptor 1-A (366 aa).

The Extracellular portion of the chain corresponds to 1 to 52 (MASLSEFVSEPISMMSQTSAASESQCYYNETIAFFYNRSGKYLATEWNAVSK). Disulfide bonds link Cys26–Cys192 and Cys190–Cys197. Asn29 and Asn37 each carry an N-linked (GlcNAc...) asparagine glycan. An a 1-acyl-sn-glycero-3-phosphate-binding site is contributed by Lys41. A helical membrane pass occupies residues 53–77 (LVMGLGITVCIFIMLANLLVMVAIY). The Cytoplasmic segment spans residues 78–85 (VNRRFHFP). The helical transmembrane segment at 86–109 (IYYLMANLAAADFFAGLAYFYLMF) threads the bilayer. Over 110–123 (NTGPNTRRLTVSTW) the chain is Extracellular. A helical membrane pass occupies residues 124 to 146 (LLRQGLIDTSLTASVANLLAIAI). 126-131 (RQGLID) provides a ligand contact to a 1-acyl-sn-glycero-3-phosphate. Residues 147–165 (ERHITVFRMQLHTRMSNRR) lie on the Cytoplasmic side of the membrane. The helical transmembrane segment at 166-186 (VVVVIVVIWTVAIVMGAIPSV) threads the bilayer. Topologically, residues 187–206 (GWNCICDLEQCSNMAPLYSD) are extracellular. The helical transmembrane segment at 207-227 (SYLIFWTIFNLVTFVVMVVLY) threads the bilayer. Trp212 contacts a 1-acyl-sn-glycero-3-phosphate. Over 228-257 (AHIFVYVRQKTMRMSRHSSGPRRNRDTMMS) the chain is Cytoplasmic. Residues 258–282 (LLKTVVIVLGAFIVCWTPGLVLLLL) form a helical membrane-spanning segment. The Extracellular segment spans residues 283-296 (DICCPQCNILAYEK). Cys286 and Cys289 are disulfide-bonded. A helical membrane pass occupies residues 297 to 317 (FFLLLAEFNSAMNPIIYSYRD). At 318–366 (KEMSATFKQILCCQRTENVNGPTEGSDRSASSLNHTILAGVHSNDHSVV) the chain is on the cytoplasmic side.

Belongs to the G-protein coupled receptor 1 family. Expressed at high levels in oocytes and at lower levels in brain and spinal cord. Below detection level in lung, heart, kidney, liver, muscle, stomach, and intestine.

It is found in the cell surface. The protein localises to the cell membrane. The protein resides in the endosome. Its function is as follows. Receptor for lysophosphatidic acid (LPA). Plays a role in the reorganization of the actin cytoskeleton, cell migration, differentiation and proliferation, and thereby contributes to the responses to tissue damage and infectious agents. Activates downstream signaling cascades via the G(i)/G(o), G(12)/G(13), and G(q) families of heteromeric G proteins. Signaling inhibits adenylyl cyclase activity and decreases cellular cAMP levels. Signaling triggers an increase of cytoplasmic Ca(2+) levels. Signaling leads to the activation of phospholipase C (PLC) and the formation of inositol 1,4,5-trisphosphate. Signaling mediates activation of down-stream MAP kinases. Contributes to the regulation of cell shape. Promotes Rho-dependent reorganization of the actin cytoskeleton in neuronal cells and neurite retraction. Promotes the activation of Rho and the formation of actin stress fibers. Promotes formation of lamellipodia at the leading edge of migrating cells via activation of Rac. Through its function as lysophosphatidic acid receptor, plays a role in chemotaxis and cell migration, including responses to injury and wounding. Promotes cell proliferation in response to lysophosphatidic acid. The chain is Lysophosphatidic acid receptor 1-A (lpar1-a) from Xenopus laevis (African clawed frog).